The sequence spans 339 residues: ADP-L-glycero-D-manno-heptose-6-epimerase (339 aa).

NADP(+)-binding positions include 11 to 12 (FI), 32 to 33 (DD), K39, K54, 75 to 79 (EGACS), and N92. Residue Y139 is the Proton acceptor of the active site. K143 provides a ligand contact to NADP(+). N170 contributes to the substrate binding site. Residues V171 and K179 each contribute to the NADP(+) site. K179 functions as the Proton acceptor in the catalytic mechanism. Substrate-binding positions include R181, H188, 202–205 (FGEY), R215, and Y294.

It belongs to the NAD(P)-dependent epimerase/dehydratase family. HldD subfamily. In terms of assembly, homopentamer. Requires NADP(+) as cofactor.

The catalysed reaction is ADP-D-glycero-beta-D-manno-heptose = ADP-L-glycero-beta-D-manno-heptose. Its pathway is nucleotide-sugar biosynthesis; ADP-L-glycero-beta-D-manno-heptose biosynthesis; ADP-L-glycero-beta-D-manno-heptose from D-glycero-beta-D-manno-heptose 7-phosphate: step 4/4. Catalyzes the interconversion between ADP-D-glycero-beta-D-manno-heptose and ADP-L-glycero-beta-D-manno-heptose via an epimerization at carbon 6 of the heptose. This chain is ADP-L-glycero-D-manno-heptose-6-epimerase, found in Polynucleobacter necessarius subsp. necessarius (strain STIR1).